The following is a 316-amino-acid chain: Bifunctional protein FolD (316 aa).

Residues 165 to 167 (GKS) and I231 each bind NADP(+).

It belongs to the tetrahydrofolate dehydrogenase/cyclohydrolase family. In terms of assembly, homodimer.

The catalysed reaction is (6R)-5,10-methylene-5,6,7,8-tetrahydrofolate + NADP(+) = (6R)-5,10-methenyltetrahydrofolate + NADPH. It carries out the reaction (6R)-5,10-methenyltetrahydrofolate + H2O = (6R)-10-formyltetrahydrofolate + H(+). It functions in the pathway one-carbon metabolism; tetrahydrofolate interconversion. Catalyzes the oxidation of 5,10-methylenetetrahydrofolate to 5,10-methenyltetrahydrofolate and then the hydrolysis of 5,10-methenyltetrahydrofolate to 10-formyltetrahydrofolate. This Sphingobium chlorophenolicum protein is Bifunctional protein FolD.